The primary structure comprises 448 residues: Phosphoglucosamine mutase (448 aa).

The active-site Phosphoserine intermediate is S102. Mg(2+)-binding residues include S102, D242, D244, and D246. S102 bears the Phosphoserine mark.

The protein belongs to the phosphohexose mutase family. Requires Mg(2+) as cofactor. In terms of processing, activated by phosphorylation.

The catalysed reaction is alpha-D-glucosamine 1-phosphate = D-glucosamine 6-phosphate. In terms of biological role, catalyzes the conversion of glucosamine-6-phosphate to glucosamine-1-phosphate. The protein is Phosphoglucosamine mutase of Brevibacillus brevis (strain 47 / JCM 6285 / NBRC 100599).